Consider the following 218-residue polypeptide: Putative receptor like protein 25 (218 aa).

The Extracellular segment spans residues 1–178 (MIYTKNAYGS…QEDAKVLNWK (178 aa)). 4 LRR repeats span residues 34-58 (LTLY…IGLL), 59-82 (KALI…MANL), 83-106 (IELE…LKTL), and 108-131 (FLGY…QITG). N-linked (GlcNAc...) asparagine glycosylation occurs at N65. N-linked (GlcNAc...) asparagine glycosylation is present at N113. A helical membrane pass occupies residues 179–199 (AVATGYGPGVFFGLAIAQIIA). At 200 to 218 (SYKPEWLVKIIGPNKRRNH) the chain is on the cytoplasmic side.

This sequence belongs to the RLP family.

The protein localises to the cell membrane. This Arabidopsis thaliana (Mouse-ear cress) protein is Putative receptor like protein 25.